The following is a 134-amino-acid chain: Gastrin-releasing peptide (134 aa).

Positions 1 to 23 are cleaved as a signal peptide; that stretch reads MRGREVPLVLLALVLCLAPRGWA. M50 bears the Methionine amide mark. A propeptide spanning residues 54–134 is cleaved from the precursor; it reads SVAESPQLHE…QHEGRNPQLN (81 aa). The tract at residues 95 to 134 is disordered; that stretch reads GHQMPPWEPLSIHQPAWDSEDVSNFKDTGPQHEGRNPQLN. A compositionally biased stretch (basic and acidic residues) spans 123 to 134; that stretch reads GPQHEGRNPQLN.

The protein belongs to the bombesin/neuromedin-B/ranatensin family. As to expression, detected in adrenal medulla (at protein level).

It localises to the cytoplasmic vesicle. The protein resides in the secretory vesicle lumen. The protein localises to the secreted. It is found in the cell projection. Its subcellular location is the neuron projection. In terms of biological role, stimulates the release of gastrin and other gastrointestinal hormones. Contributes to the perception of prurient stimuli and to the transmission of itch signals in the spinal cord that promote scratching behavior. Contributes primarily to nonhistaminergic itch sensation. In one study, shown to act in the amygdala as part of an inhibitory network which inhibits memory specifically related to learned fear. In another study, shown to act on vasoactive intestinal peptide (VIP)-expressing cells in the auditory cortex, most likely via extrasynaptic diffusion from local and long-range sources, to mediate disinhibition of glutamatergic cells via VIP cell-specific GRPR signaling which leads to enhanced auditory fear memories. Contributes to the regulation of food intake. Inhibits voltage-gated sodium channels but enhances voltage-gated potassium channels in hippocampal neurons. Induces sighing by acting directly on the pre-Botzinger complex, a cluster of several thousand neurons in the ventrolateral medulla responsible for inspiration during respiratory activity. Its function is as follows. Induces an itch response through activation of receptors present on mast cells, triggering mast cell degranulation. This is Gastrin-releasing peptide (GRP) from Bos taurus (Bovine).